The sequence spans 437 residues: Aminopeptidase W (437 aa).

Active-site residues include cysteine 70, histidine 361, and asparagine 382.

The protein belongs to the peptidase C1 family.

Its subcellular location is the cytoplasm. This chain is Aminopeptidase W (pepW), found in Lactobacillus delbrueckii subsp. lactis.